Here is a 316-residue protein sequence, read N- to C-terminus: MDQIEHITINTNGIKMHIASVGTGPVVLLLHGFPELWYSWRHQLLYLSSVGYRAIAPDLRGYGDTDSPASPTSYTALHIVGDLVGALDELGIEKVFLVGHDWGAIIAWYFCLFRPDRIKALVNLSVQFIPRNPAIPFIEGFRTAFGDDFYMCRFQVPGEAEEDFASIDTAQLFKTSLCNRSSAPPCLPKEIGFRAIPPPENLPSWLTEEDINYYAAKFKQTGFTGALNYYRAFDLTWELTAPWTGAQIQVPVKFIVGDSDLTYHFPGAKEYIHNGGFKKDVPLLEEVVVVKDACHFINQERPQEINAHIHDFINKF.

Positions 25–302 constitute an AB hydrolase-1 domain; sequence PVVLLLHGFP…ACHFINQERP (278 aa). D101 acts as the Nucleophile in catalysis. Residue Y150 coordinates an epoxide. Y230 (proton donor) is an active-site residue. Catalysis depends on H295, which acts as the Proton acceptor.

Belongs to the AB hydrolase superfamily. Epoxide hydrolase family. As to quaternary structure, homodimer. As to expression, highly expressed in young fruits 15 days after anthesis (15-DAA).

The enzyme catalyses an epoxide + H2O = an ethanediol. The catalysed reaction is (24S)-24,25-epoxycucurbitadienol + H2O = (24R)-24,25-dihydroxycucurbitadienol. It participates in secondary metabolite biosynthesis; terpenoid biosynthesis. In terms of biological role, epoxide hydrolase involved in the biosynthesis of cucurbitacin and mogroside tetracyclic triterpene natural products (e.g. siamenoside I and mogrosides IV, V and VI). Cucurbitacins have cytotoxic properties and exhibit deterrent taste as a defense barrier against herbivores. Mogrosides are nonsugar highly oxygenated compounds used as high-intensity zero-calorie sweeteners; they also possess pharmacological properties such as regulating immunity, lowering blood sugar and lipid levels, protecting the liver, and acting as antioxidants and antitumor agents. Catalyzes the hydrolysis of aromatic epoxide-containing substrates, such as the conversion of 24,25-epoxycucurbitadienol to 24,25-dihydroxycucurbitadienol. The sequence is that of Epoxide hydrolase 3 from Siraitia grosvenorii (Monk's fruit).